The primary structure comprises 359 residues: 3-dehydroquinate synthase (359 aa).

NAD(+) contacts are provided by residues 106-110 (GVVGD), 130-131 (TT), Lys-143, Lys-152, and 170-173 (TLQT). Residues Glu-185, His-248, and His-265 each coordinate Zn(2+).

Belongs to the sugar phosphate cyclases superfamily. Dehydroquinate synthase family. Co(2+) is required as a cofactor. Zn(2+) serves as cofactor. The cofactor is NAD(+).

The protein resides in the cytoplasm. It catalyses the reaction 7-phospho-2-dehydro-3-deoxy-D-arabino-heptonate = 3-dehydroquinate + phosphate. It functions in the pathway metabolic intermediate biosynthesis; chorismate biosynthesis; chorismate from D-erythrose 4-phosphate and phosphoenolpyruvate: step 2/7. In terms of biological role, catalyzes the conversion of 3-deoxy-D-arabino-heptulosonate 7-phosphate (DAHP) to dehydroquinate (DHQ). In Desulforamulus reducens (strain ATCC BAA-1160 / DSM 100696 / MI-1) (Desulfotomaculum reducens), this protein is 3-dehydroquinate synthase.